The following is a 130-amino-acid chain: Small ribosomal subunit protein uS9 (130 aa).

It belongs to the universal ribosomal protein uS9 family.

The polypeptide is Small ribosomal subunit protein uS9 (Pseudomonas entomophila (strain L48)).